Reading from the N-terminus, the 97-residue chain is MKPTTLLLIFTFFAMPGIVYAESPFSSLQSAKEKTTVLQDLRKICTPHASLSDEAWEKLMLSDENNKQHIREAIVAMERNNQSNYWEALGKVECPDM.

This is an uncharacterized protein from Shigella flexneri.